The chain runs to 137 residues: ATP synthase epsilon chain (137 aa).

It belongs to the ATPase epsilon chain family. In terms of assembly, F-type ATPases have 2 components, CF(1) - the catalytic core - and CF(0) - the membrane proton channel. CF(1) has five subunits: alpha(3), beta(3), gamma(1), delta(1), epsilon(1). CF(0) has three main subunits: a, b and c.

The protein resides in the cell membrane. Its function is as follows. Produces ATP from ADP in the presence of a proton gradient across the membrane. The polypeptide is ATP synthase epsilon chain (Streptococcus agalactiae serotype Ia (strain ATCC 27591 / A909 / CDC SS700)).